The chain runs to 156 residues: Ribonuclease pancreatic (156 aa).

The first 28 residues, 1–28, serve as a signal peptide directing secretion; that stretch reads MALEKSLVLLPLLVLILLVLGWVQPSLG. Residues Lys35 and Arg38 each contribute to the substrate site. Residue His40 is the Proton acceptor of the active site. Asn50 and Asn62 each carry an N-linked (GlcNAc...) asparagine glycan. 4 disulfide bridges follow: Cys54–Cys112, Cys68–Cys123, Cys86–Cys138, and Cys93–Cys100. Substrate contacts are provided by residues 69–73 and Lys94; that span reads KPVNT. N-linked (GlcNAc...) asparagine glycosylation is present at Asn104. Arg113 is a binding site for substrate. The active-site Proton donor is the His147.

It belongs to the pancreatic ribonuclease family. Monomer. Interacts with and forms tight 1:1 complexes with RNH1. Dimerization of two such complexes may occur. Interaction with RNH1 inhibits this protein. As to expression, pancreas and other tissues and body fluids (indicating it may have other physiological functions besides its role in digestion).

The protein resides in the secreted. The catalysed reaction is an [RNA] containing cytidine + H2O = an [RNA]-3'-cytidine-3'-phosphate + a 5'-hydroxy-ribonucleotide-3'-[RNA].. It catalyses the reaction an [RNA] containing uridine + H2O = an [RNA]-3'-uridine-3'-phosphate + a 5'-hydroxy-ribonucleotide-3'-[RNA].. Endonuclease that catalyzes the cleavage of RNA on the 3' side of pyrimidine nucleotides. Acts on single-stranded and double-stranded RNA. This is Ribonuclease pancreatic (RNASE1) from Pongo pygmaeus (Bornean orangutan).